A 407-amino-acid polypeptide reads, in one-letter code: Serine hydroxymethyltransferase (407 aa).

(6S)-5,6,7,8-tetrahydrofolate-binding positions include Leu-117 and 121–123; that span reads GHL. Residue Lys-226 is modified to N6-(pyridoxal phosphate)lysine. Residue Glu-242 coordinates (6S)-5,6,7,8-tetrahydrofolate.

It belongs to the SHMT family. As to quaternary structure, homodimer. Requires pyridoxal 5'-phosphate as cofactor.

The protein localises to the cytoplasm. It carries out the reaction (6R)-5,10-methylene-5,6,7,8-tetrahydrofolate + glycine + H2O = (6S)-5,6,7,8-tetrahydrofolate + L-serine. Its pathway is one-carbon metabolism; tetrahydrofolate interconversion. It participates in amino-acid biosynthesis; glycine biosynthesis; glycine from L-serine: step 1/1. Its function is as follows. Catalyzes the reversible interconversion of serine and glycine with tetrahydrofolate (THF) serving as the one-carbon carrier. This reaction serves as the major source of one-carbon groups required for the biosynthesis of purines, thymidylate, methionine, and other important biomolecules. Also exhibits THF-independent aldolase activity toward beta-hydroxyamino acids, producing glycine and aldehydes, via a retro-aldol mechanism. In Thermus thermophilus (strain ATCC BAA-163 / DSM 7039 / HB27), this protein is Serine hydroxymethyltransferase.